The following is a 162-amino-acid chain: uncharacterized protein (162 aa).

Helical transmembrane passes span 28 to 50 (ALAL…VCFF), 57 to 76 (LLLL…DPWL), and 108 to 130 (YNTM…YALA).

Its subcellular location is the cell membrane. This is an uncharacterized protein from Treponema pallidum (strain Nichols).